Reading from the N-terminus, the 445-residue chain is Proline--tRNA ligase (445 aa).

The protein belongs to the class-II aminoacyl-tRNA synthetase family. ProS type 2 subfamily. In terms of assembly, homodimer.

It is found in the cytoplasm. The enzyme catalyses tRNA(Pro) + L-proline + ATP = L-prolyl-tRNA(Pro) + AMP + diphosphate. Functionally, catalyzes the attachment of proline to tRNA(Pro) in a two-step reaction: proline is first activated by ATP to form Pro-AMP and then transferred to the acceptor end of tRNA(Pro). The chain is Proline--tRNA ligase from Cereibacter sphaeroides (strain ATCC 17025 / ATH 2.4.3) (Rhodobacter sphaeroides).